We begin with the raw amino-acid sequence, 130 residues long: MIGEWNNGTGRRKSSVARVFLKKGSGQIVVNGKAIEKFFGRATSIMICKQPLLLTNHAETFDIMVNVAGGGESGQAGAVRHGITRALIDYDATLKPELSKAGFVTRDAREVERKKVGFHGARRRKQFSKR.

The protein belongs to the universal ribosomal protein uS9 family.

This is Small ribosomal subunit protein uS9 from Albidiferax ferrireducens (strain ATCC BAA-621 / DSM 15236 / T118) (Rhodoferax ferrireducens).